A 276-amino-acid chain; its full sequence is Putative translation initiation factor eIF-2B subunit 2-like (276 aa).

It belongs to the eIF-2B alpha/beta/delta subunits family. Complex of two different subunits.

Catalyzes the exchange of initiation factor 2-bound GDP for GTP. The polypeptide is Putative translation initiation factor eIF-2B subunit 2-like (Pyrococcus abyssi (strain GE5 / Orsay)).